A 2345-amino-acid chain; its full sequence is MDEPSPLAKTLELNQHSRFIIGSVSEDNSEDEISNLVKLDLEEKEGSLSPASVSSDTLSDLGISALQDGLAFHMRSSMSGLHLVKQGRDRKKIDSQRDFTVASPAEFVTRFGGNKVIEKVLIANNGIAAVKCMRSIRRWSYEMFRNERAIRFVVMVTPEDLKANAEYIKMADHYVPVPGGANNNNYANVELILDIAKRIPVQAVWAGWGHASENPKLPELLLKNGIAFMGPPSQAMWALGDKIASSIVAQTAGIPTLPWSGSGLRVDWQENDFSKRILNVPQDLYEKGYVKDVDDGLKAAEEVGYPVMIKASEGGGGKGIRKVNNADDFPNLFRQVQAEVPGSPIFVMRLAKQSRHLEVQILADQYGNAISLFGRDCSVQRRHQKIIEEAPAAIATPAVFEHMEQCAVKLAKMVGYVSAGTVEYLYSQDGSFYFLELNPRLQVEHPCTEMVADVNLPAAQLQIAMGIPLFRIKDIRMMYGVSPWGDAPIDFENSAHVPCPRGHVIAARITSENPDEGFKPSSGTVQELNFRSNKNVWGYFSVAAAGGLHEFADSQFGHCFSWGENREEAISNMVVALKELSIRGDFRTTVEYLIKLLETESFQLNRIDTGWLDRLIAEKVQAERPDTMLGVVCGALHVADVNLRNSISNFLHSLERGQVLPAHTLLNTVDVELIYEGIKYVLKVTRQSPNSYVVIMNGSCVEVDVHRLSDGGLLLSYDGSSYTTYMKEEVDRYRITIGNKTCVFEKENDPSVMRSPSAGKLIQYIVEDGGHVFAGQCYAEIEVMKMVMTLTAVESGCIHYVKRPGAALDPGCVIAKMQLDNPSKVQQAELHTGSLPQIQSTALRGEKLHRVFHYVLDNLVNVMNGYCLPDPFFSSKVKDWVERLMKTLRDPSLPLLELQDIMTSVSGRIPLNVEKSIKKEMAQYASNITSVLCQFPSQQIANILDSHAATLNRKSEREVFFMNTQSIVQLVQRYRSGIRGHMKAVVMDLLRQYLRVETQFQNGHYDKCVFALREENKSDMNTVLNYIFSHAQVTKKNLLVTMLIDQLCGRDPTLTDELLNILTELTQLSKTTNAKVALRARQVLIASHLPSYDVRHNQVESIFLSAIDMYGHQFCIENLQKLILSETSIFDVLPNFFYHSNQVVRMAALEVYVRRAYIAYELNSVQHRQLKDNTCVVEFQFMLPTSHPNRGNIPTLNRMSFASNLNHYGMTHVASVSDVLLDNAFTPPCQRMGGMVSFRTFEDFVRIFDEVMGCFCDSPPQSPTFPESGHTSLYDEDKVPRDEPIHILNVAIKTDGDIEDDRLAAMFREFTQQNKATLVEHGIRRLTFLVAQKDFRKQVNCEVDQRFHREFPKFFTFRARDKFEEDRIYRHLEPALAFQLELNRMRNFDLTAIPCANHKMHLYLGAAKVEVGTEVTDYRFFVRAIIRHSDLVTKEASFEYLQNEGERLLLEAMDELEVAFNNTNVRTDCNHIFLNFVPTVIMDPSKIEESVRSMVMRYGSRLWKLRVLQAELKINIRLTTTGKAIPIRLFLTNESGYYLDISLYKEVTDSRTAQIMFQAYGDKQGPLHGMLINTPYVTKDLLQSKRFQAQSLGTTYIYDIPEMFRQSLIKLWESMSTQAFLPSPPLPSDILTYTELVLDDQGQLVHMNRLPGGNEIGMVAWKMSLKSPEYPDGRDVIVIGNDITYRIGSFGPQEDLLFLRASELARAEGIPRIYVAANSGARIGLAEEIRHMFHVAWVDSEDPYKGYKYLYLTPQDYKRVSALNSVHCEHVEDEGESRYKITDIIGKEEGLGAENLRGSGMIAGESSLAYDEIITISLVTCRAIGIGAYLVRLGQRTIQVENSHLILTGAGALNKVLGREVYTSNNQLGGIQIMHNNGVTHCTVCDDFEGVFTVLHWLSYMPKNVHSSVPLLNSKDPIDRIIEFVPTKAPYDPRWMLAGRPHPTQKGQWLSGFFDYGSFSEIMQPWAQTVVVGRARLGGIPVGVVAVETRTVELSVPADPANLDSEAKIIQQAGQVWFPDSAFKTYQAIKDFNREGLPLMVFANWRGFSGGMKDMYDQVLKFGAYIVDGLRECSQPVMVYIPPQAELRGGSWVVIDPTINPRHMEMYADRESRGSVLEPEGTVEIKFRKKDLVKTMRRVDPVYIRLAERLGTPELSPTERKELESKLKEREEFLIPIYHQVAVQFADLHDTPGRMQEKGVINDILDWKTSRTFFYWRLRRLLLEDLVKKKIHSANPELTDGQIQAMLRRWFVEVEGTVKAYVWDNNKDLVEWLEKQLTEEDGVRSVIEENIKYISRDYVLKQIRSLVQANPEVAMDSIVHMTQHISPTQRAEVVRILSTMDSPST.

The residue at position 1 (M1) is an N-acetylmethionine. Phosphoserine occurs at positions 5, 23, 25, 29, 34, 47, 49, and 52. T57 carries the phosphothreonine modification. The residue at position 77 (S77) is a Phosphoserine. The residue at position 79 (S79) is a Phosphoserine; by AMPK. The 502-residue stretch at 116-617 (VIEKVLIANN…DTGWLDRLIA (502 aa)) folds into the Biotin carboxylation domain. The region spanning 274 to 465 (SKRILNVPQD…LPAAQLQIAM (192 aa)) is the ATP-grasp domain. Position 314-319 (314-319 (GGGGKG)) interacts with ATP. Positions 423, 436, and 438 each coordinate Mg(2+). Residues E423, E436, and N438 each contribute to the Mn(2+) site. R440 is a catalytic residue. Phosphothreonine is present on T609. The region spanning 744–818 (FEKENDPSVM…DPGCVIAKMQ (75 aa)) is the Biotinyl-binding domain. N6-biotinyllysine is present on K785. A Phosphoserine modification is found at S834. Phosphoserine; by AMPK; in vitro occurs at positions 1200 and 1215. S1217 bears the Phosphoserine mark. T1226 is subject to Phosphothreonine. S1258, S1262, and S1272 each carry phosphoserine. Residue K1333 is modified to N6-acetyllysine. Residues 1575–1913 (PYVTKDLLQS…NVHSSVPLLN (339 aa)) form the CoA carboxyltransferase N-terminal domain. Residues 1575–2233 (PYVTKDLLQS…EDLVKKKIHS (659 aa)) are carboxyltransferase. Residues R1822, K2126, and R2128 each coordinate CoA. The CoA carboxyltransferase C-terminal domain occupies 1917–2233 (PIDRIIEFVP…EDLVKKKIHS (317 aa)). T2152 carries the post-translational modification Phosphothreonine.

Monomer, homodimer, and homotetramer. Can form filamentous polymers. Interacts in its inactive phosphorylated form with the BRCT domains of BRCA1 which prevents ACACA dephosphorylation and inhibits lipid synthesis. Interacts with MID1IP1; interaction with MID1IP1 promotes oligomerization and increases its activity. Requires Mg(2+) as cofactor. Mn(2+) is required as a cofactor. The cofactor is biotin. The N-terminus is blocked. In terms of processing, phosphorylation on Ser-1262 is required for interaction with BRCA1. Post-translationally, phosphorylation at Ser-79 by AMPK inactivates enzyme activity. Phosphorylated in vitro at Ser-1200 and Ser-1215 by AMPK; the relevance of phosphorylation of these sites in vivo is however unclear. The biotin cofactor is covalently attached to the central biotinyl-binding domain and is required for the catalytic activity.

It is found in the cytoplasm. The protein resides in the cytosol. The catalysed reaction is hydrogencarbonate + acetyl-CoA + ATP = malonyl-CoA + ADP + phosphate + H(+). The protein operates within lipid metabolism; malonyl-CoA biosynthesis; malonyl-CoA from acetyl-CoA: step 1/1. Inhibited by phosphorylation. Citrate promotes oligomerization of the protein into filaments that correspond to the most active form of the carboxylase. Its function is as follows. Cytosolic enzyme that catalyzes the carboxylation of acetyl-CoA to malonyl-CoA, the first and rate-limiting step of de novo fatty acid biosynthesis. This is a 2 steps reaction starting with the ATP-dependent carboxylation of the biotin carried by the biotin carboxyl carrier (BCC) domain followed by the transfer of the carboxyl group from carboxylated biotin to acetyl-CoA. The sequence is that of Acetyl-CoA carboxylase 1 from Rattus norvegicus (Rat).